Here is a 279-residue protein sequence, read N- to C-terminus: MSRTNFDTLLEAGCHFGHLKRKWNPSMAPYIFMERNGIHIIDLHKTVAKVDEAADALKQIAKSGKKVLFVATKKQAKQVVAEKAASVNMPYVIERWPGGMLTNFPTIRKAVKKMATIDKLTNDGTYSNLSKREVLQISRQRAKLEKNLGSIADLTRLPSALFVIDVLKENIAVREANRLGIPVFAIVDTNSDPSNVDFVIPANDDATKSVEVILDACCGAIAEGLEERKAEKVDMEAAGENAPKGAGKKKNTKARMDKAEEEAINAAKAAAFLKEDEEA.

The segment at K232–E260 is disordered.

It belongs to the universal ribosomal protein uS2 family.

This chain is Small ribosomal subunit protein uS2, found in Phocaeicola vulgatus (strain ATCC 8482 / DSM 1447 / JCM 5826 / CCUG 4940 / NBRC 14291 / NCTC 11154) (Bacteroides vulgatus).